The primary structure comprises 196 residues: Peptidyl-tRNA hydrolase (196 aa).

Tyrosine 17 contributes to the tRNA binding site. Residue histidine 22 is the Proton acceptor of the active site. The tRNA site is built by tyrosine 69, asparagine 71, and asparagine 117.

This sequence belongs to the PTH family. Monomer.

It is found in the cytoplasm. The enzyme catalyses an N-acyl-L-alpha-aminoacyl-tRNA + H2O = an N-acyl-L-amino acid + a tRNA + H(+). Functionally, hydrolyzes ribosome-free peptidyl-tRNAs (with 1 or more amino acids incorporated), which drop off the ribosome during protein synthesis, or as a result of ribosome stalling. Catalyzes the release of premature peptidyl moieties from peptidyl-tRNA molecules trapped in stalled 50S ribosomal subunits, and thus maintains levels of free tRNAs and 50S ribosomes. The protein is Peptidyl-tRNA hydrolase of Pseudarthrobacter chlorophenolicus (strain ATCC 700700 / DSM 12829 / CIP 107037 / JCM 12360 / KCTC 9906 / NCIMB 13794 / A6) (Arthrobacter chlorophenolicus).